The chain runs to 83 residues: EMBRYO SURROUNDING FACTOR 1.1 (83 aa).

A signal peptide spans 1–22 (MKSSHTSLICILMLSLVALHQC). Cystine bridges form between cysteine 41–cysteine 56, cysteine 46–cysteine 75, cysteine 54–cysteine 71, and cysteine 57–cysteine 64.

The protein belongs to the MEG family. Expressed exclusively in ovule embryo sacs and in early developing endosperms.

Functionally, maternally-contributed central cell peptide regulating suspensor development and correct auxin distribution in early developing embryos. This is EMBRYO SURROUNDING FACTOR 1.1 (ESF1.1) from Arabidopsis thaliana (Mouse-ear cress).